The chain runs to 422 residues: Serine/threonine-protein kinase H1 homolog (422 aa).

The tract at residues 35 to 80 (FIKYDGGGEKTGSPSPQGQSQAVAKVSQSPPPANDQPEPADSHRKK) is disordered. The span at 46-62 (GSPSPQGQSQAVAKVSQ) shows a compositional bias: polar residues. In terms of domain architecture, Protein kinase spans 96 to 353 (YDIKALIGRG…AGQALKHPWI (258 aa)). ATP-binding positions include 102–110 (IGRGSFSRV) and K125. D216 acts as the Proton acceptor in catalysis. The tract at residues 376–422 (RASSRCHSTKSSQSTRSSRSTKSSKARRLREKELRELNRRYQQQCNG) is disordered. Positions 384–396 (TKSSQSTRSSRST) are enriched in low complexity. Over residues 405 to 414 (REKELRELNR) the composition is skewed to basic and acidic residues.

It belongs to the protein kinase superfamily. CAMK Ser/Thr protein kinase family.

The enzyme catalyses L-seryl-[protein] + ATP = O-phospho-L-seryl-[protein] + ADP + H(+). The catalysed reaction is L-threonyl-[protein] + ATP = O-phospho-L-threonyl-[protein] + ADP + H(+). This is Serine/threonine-protein kinase H1 homolog (pskh1) from Danio rerio (Zebrafish).